The chain runs to 365 residues: N-acetylgalactosamine-N,N'-diacetylbacillosaminyl-diphospho-undecaprenol 4-alpha-N-acetylgalactosaminyltransferase (365 aa).

This sequence belongs to the glycosyltransferase group 1 family.

The protein resides in the cell inner membrane. It carries out the reaction N-acetyl-alpha-D-galactosaminyl-(1-&gt;3)-N,N'-diacetyl-alpha-D-bacillosaminyl-tri-trans,hepta-cis-undecaprenyl diphosphate + UDP-N-acetyl-alpha-D-galactosamine = N-acetyl-alpha-D-galactosaminyl-(1-&gt;4)-N-acetyl-alpha-D-galactosaminyl-(1-&gt;3)-N,N'-diacetyl-alpha-D-bacillosaminyl-tri-trans,heptacis-undecaprenyl diphosphate + UDP + H(+). It participates in protein modification; protein glycosylation. Adds a GalNAc residue on to the Und-PP-Bac2,4diNAc-GalNAc disaccharide in the N-linked protein glycosylation pathway. Transfers the third sugar in the heptasaccharide biosynthesis. This Campylobacter jejuni subsp. jejuni serotype O:2 (strain ATCC 700819 / NCTC 11168) protein is N-acetylgalactosamine-N,N'-diacetylbacillosaminyl-diphospho-undecaprenol 4-alpha-N-acetylgalactosaminyltransferase (pglJ).